The primary structure comprises 341 residues: Glycerol-3-phosphate dehydrogenase [NAD(P)+] (341 aa).

The NADPH site is built by Ser-15, Trp-16, Arg-36, and Lys-110. Residues Lys-110, Gly-139, and Ser-141 each coordinate sn-glycerol 3-phosphate. Position 143 (Ala-143) interacts with NADPH. Sn-glycerol 3-phosphate is bound by residues Lys-194, Asp-247, Ser-257, Arg-258, and Asn-259. The active-site Proton acceptor is the Lys-194. Arg-258 provides a ligand contact to NADPH. Val-282 and Glu-284 together coordinate NADPH.

The protein belongs to the NAD-dependent glycerol-3-phosphate dehydrogenase family.

The protein localises to the cytoplasm. It carries out the reaction sn-glycerol 3-phosphate + NAD(+) = dihydroxyacetone phosphate + NADH + H(+). It catalyses the reaction sn-glycerol 3-phosphate + NADP(+) = dihydroxyacetone phosphate + NADPH + H(+). It functions in the pathway membrane lipid metabolism; glycerophospholipid metabolism. Functionally, catalyzes the reduction of the glycolytic intermediate dihydroxyacetone phosphate (DHAP) to sn-glycerol 3-phosphate (G3P), the key precursor for phospholipid synthesis. The sequence is that of Glycerol-3-phosphate dehydrogenase [NAD(P)+] from Stenotrophomonas maltophilia (strain R551-3).